We begin with the raw amino-acid sequence, 347 residues long: D-alanine--D-alanine ligase (347 aa).

An ATP-grasp domain is found at 131–333 (KRVLESAGIA…YPKLIERLVD (203 aa)). Residue 161 to 216 (EEKLAYPVFTKPSNMGSSVGISKSENQEELRQALKLAFRYDSRVLVEQGVNAREIE) participates in ATP binding. 3 residues coordinate Mg(2+): Asp-287, Glu-300, and Asn-302.

It belongs to the D-alanine--D-alanine ligase family. Mg(2+) serves as cofactor. It depends on Mn(2+) as a cofactor.

It is found in the cytoplasm. The catalysed reaction is 2 D-alanine + ATP = D-alanyl-D-alanine + ADP + phosphate + H(+). The protein operates within cell wall biogenesis; peptidoglycan biosynthesis. Its function is as follows. Cell wall formation. The polypeptide is D-alanine--D-alanine ligase (Streptococcus pneumoniae serotype 4 (strain ATCC BAA-334 / TIGR4)).